Here is a 298-residue protein sequence, read N- to C-terminus: Tyrosine recombinase XerD (298 aa).

A Core-binding (CB) domain is found at threonine 3 to leucine 88. The Tyr recombinase domain occupies proline 109–alanine 292. Catalysis depends on residues arginine 149, lysine 173, histidine 244, arginine 247, and histidine 270. Tyrosine 279 (O-(3'-phospho-DNA)-tyrosine intermediate) is an active-site residue.

It belongs to the 'phage' integrase family. XerD subfamily. As to quaternary structure, forms a cyclic heterotetrameric complex composed of two molecules of XerC and two molecules of XerD.

It is found in the cytoplasm. Site-specific tyrosine recombinase, which acts by catalyzing the cutting and rejoining of the recombining DNA molecules. The XerC-XerD complex is essential to convert dimers of the bacterial chromosome into monomers to permit their segregation at cell division. It also contributes to the segregational stability of plasmids. This Pseudomonas aeruginosa (strain ATCC 15692 / DSM 22644 / CIP 104116 / JCM 14847 / LMG 12228 / 1C / PRS 101 / PAO1) protein is Tyrosine recombinase XerD.